A 226-amino-acid chain; its full sequence is UPF0758 protein PsycPRwf_0491 (226 aa).

The MPN domain maps to 102–224; sequence SLNRSQVVKD…TLSFAETATA (123 aa). Zn(2+) is bound by residues histidine 173, histidine 175, and aspartate 186. Residues 173-186 carry the JAMM motif motif; the sequence is HNHPNQDATPSAAD.

It belongs to the UPF0758 family.

The chain is UPF0758 protein PsycPRwf_0491 from Psychrobacter sp. (strain PRwf-1).